The chain runs to 351 residues: Homocitrate synthase (351 aa).

In terms of domain architecture, Pyruvate carboxyltransferase spans 23–272; that stretch reads IKFCDTTLRD…KLPVDLDTTS (250 aa).

The protein belongs to the alpha-IPM synthase/homocitrate synthase family.

It carries out the reaction acetyl-CoA + 2-oxoglutarate + H2O = (2R)-homocitrate + CoA + H(+). This protein is a Fe-Mo-cofactor biosynthetic component. The protein is Homocitrate synthase (nifV) of Frankia alni.